A 339-amino-acid polypeptide reads, in one-letter code: Dihydroorotate dehydrogenase (quinone) (339 aa).

Residues 61 to 65 (AGLDK) and T85 contribute to the FMN site. K65 serves as a coordination point for substrate. 110–114 (NRMGF) lines the substrate pocket. Residues N138 and N171 each coordinate FMN. N171 is a binding site for substrate. S174 acts as the Nucleophile in catalysis. N176 is a substrate binding site. FMN contacts are provided by K216 and T244. Substrate is bound at residue 245-246 (NT). FMN is bound by residues G267, G296, and 317-318 (YS).

The protein belongs to the dihydroorotate dehydrogenase family. Type 2 subfamily. As to quaternary structure, monomer. Requires FMN as cofactor.

It is found in the cell membrane. The catalysed reaction is (S)-dihydroorotate + a quinone = orotate + a quinol. Its pathway is pyrimidine metabolism; UMP biosynthesis via de novo pathway; orotate from (S)-dihydroorotate (quinone route): step 1/1. Functionally, catalyzes the conversion of dihydroorotate to orotate with quinone as electron acceptor. This Teredinibacter turnerae (strain ATCC 39867 / T7901) protein is Dihydroorotate dehydrogenase (quinone).